The primary structure comprises 688 residues: G protein-coupled receptor kinase 3 (688 aa).

The interval 1–190 (MADLEAVLAD…ELNIHLSMND (190 aa)) is N-terminal. The RGS domain maps to 54 to 175 (TFDKIFNQKI…MESDKFTRFC (122 aa)). The 263-residue stretch at 191–453 (FSVHRIIGRG…ARELKEHIFF (263 aa)) folds into the Protein kinase domain. ATP is bound by residues 197–205 (IGRGGFGEV) and lysine 220. The Proton acceptor role is filled by aspartate 317. One can recognise an AGC-kinase C-terminal domain in the interval 454–521 (KGIDWQHVYL…VISERWQQEV (68 aa)). The region spanning 558–652 (DCIMHGYMLK…WLKELTCTFN (95 aa)) is the PH domain.

Belongs to the protein kinase superfamily. AGC Ser/Thr protein kinase family. GPRK subfamily. As to quaternary structure, interacts with GIT1. In terms of processing, ubiquitinated.

It localises to the postsynapse. Its subcellular location is the presynapse. The catalysed reaction is [beta-adrenergic receptor] + ATP = [beta-adrenergic receptor]-phosphate + ADP + H(+). Functionally, specifically phosphorylates the agonist-occupied form of the beta-adrenergic and closely related receptors. This chain is G protein-coupled receptor kinase 3, found in Mus musculus (Mouse).